Consider the following 347-residue polypeptide: Protein phosphatase 2C homolog 1 (347 aa).

Positions 1-41 are disordered; it reads MKGSHPNAGSLLEPLHKLNPFSENSTSGHRKNASDHSADGE. Over residues 32 to 41 the composition is skewed to basic and acidic residues; that stretch reads NASDHSADGE. The PPM-type phosphatase domain occupies 71–323; sequence LAGLMEDKNQ…DNITCIVVNL (253 aa). Mn(2+)-binding residues include D109, G110, D275, and D314.

The protein belongs to the PP2C family. Monomer. Requires Mg(2+) as cofactor. It depends on Mn(2+) as a cofactor.

The catalysed reaction is O-phospho-L-seryl-[protein] + H2O = L-seryl-[protein] + phosphate. It carries out the reaction O-phospho-L-threonyl-[protein] + H2O = L-threonyl-[protein] + phosphate. Functionally, serine and threonine phosphatase. Has a specialized role in the heat shock response. May be responsible for the dephosphorylation of hsp90. The chain is Protein phosphatase 2C homolog 1 (ptc1) from Schizosaccharomyces pombe (strain 972 / ATCC 24843) (Fission yeast).